Here is a 417-residue protein sequence, read N- to C-terminus: UDP-N-acetylglucosamine 1-carboxyvinyltransferase (417 aa).

A phosphoenolpyruvate-binding site is contributed by 22-23 (KN). R93 contributes to the UDP-N-acetyl-alpha-D-glucosamine binding site. C117 (proton donor) is an active-site residue. C117 carries the 2-(S-cysteinyl)pyruvic acid O-phosphothioketal modification. Residues 122–126 (RPVDL), D305, and I327 contribute to the UDP-N-acetyl-alpha-D-glucosamine site.

The protein belongs to the EPSP synthase family. MurA subfamily.

It localises to the cytoplasm. It carries out the reaction phosphoenolpyruvate + UDP-N-acetyl-alpha-D-glucosamine = UDP-N-acetyl-3-O-(1-carboxyvinyl)-alpha-D-glucosamine + phosphate. The protein operates within cell wall biogenesis; peptidoglycan biosynthesis. In terms of biological role, cell wall formation. Adds enolpyruvyl to UDP-N-acetylglucosamine. The chain is UDP-N-acetylglucosamine 1-carboxyvinyltransferase from Thiobacillus denitrificans (strain ATCC 25259 / T1).